Here is a 436-residue protein sequence, read N- to C-terminus: Type II methyltransferase M.BsuRI (436 aa).

Positions 59-409 (INVLSLFSGC…SPIANWAINY (351 aa)) constitute an SAM-dependent MTase C5-type domain. Cys-157 is a catalytic residue.

The protein belongs to the class I-like SAM-binding methyltransferase superfamily. C5-methyltransferase family. As to quaternary structure, monomer.

It catalyses the reaction a 2'-deoxycytidine in DNA + S-adenosyl-L-methionine = a 5-methyl-2'-deoxycytidine in DNA + S-adenosyl-L-homocysteine + H(+). Its function is as follows. A methylase, recognizes the double-stranded sequence 5'-GGCC-3', methylates C-3 on both strands, and protects the DNA from cleavage by the BsuRI endonuclease. In Bacillus subtilis, this protein is Type II methyltransferase M.BsuRI (hsdRM).